The sequence spans 81 residues: Sulfur carrier protein TusA (81 aa).

Cys-19 acts as the Cysteine persulfide intermediate in catalysis.

This sequence belongs to the sulfur carrier protein TusA family. As to quaternary structure, interacts with IscS.

Its subcellular location is the cytoplasm. The protein operates within tRNA modification. In terms of biological role, sulfur carrier protein involved in sulfur trafficking in the cell. Part of a sulfur-relay system required for 2-thiolation during synthesis of 2-thiouridine of the modified wobble base 5-methylaminomethyl-2-thiouridine (mnm(5)s(2)U) in tRNA. Interacts with IscS and stimulates its cysteine desulfurase activity. Accepts an activated sulfur from IscS, which is then transferred to TusD, and thus determines the direction of sulfur flow from IscS to 2-thiouridine formation. Also appears to be involved in sulfur transfer for the biosynthesis of molybdopterin. The protein is Sulfur carrier protein TusA of Erwinia tasmaniensis (strain DSM 17950 / CFBP 7177 / CIP 109463 / NCPPB 4357 / Et1/99).